The primary structure comprises 524 residues: Calcium-dependent protein kinase 1 (524 aa).

The segment at 1-34 is disordered; it reads MGCSQSSNVKDFKTRRSKFTNGNNYGKSGNNKNS. Residue Gly-2 is the site of N-myristoyl glycine attachment. Cys-3 carries S-palmitoyl cysteine lipidation. The short motif at 10–20 is the Basic cluster involved in membrane binding element; it reads KDFKTRRSKFT. Ser-17, Ser-28, and Ser-34 each carry phosphoserine; by autocatalysis. A compositionally biased stretch (low complexity) spans 21–32; sequence NGNNYGKSGNNK. Residues 56 to 325 form the Protein kinase domain; sequence YFKVRKLGSG…AKEALNSKWI (270 aa). Residues 62–70 and Lys-85 each bind ATP; that span reads LGSGAYGEV. The residue at position 64 (Ser-64) is a Phosphoserine; by PKG; by autocatalysis. Phosphothreonine; by autocatalysis is present on Thr-100. Residue Ser-118 is modified to Phosphoserine; by autocatalysis. The Proton acceptor role is filled by Asp-191. The residue at position 217 (Ser-217) is a Phosphoserine. A Phosphoserine; by autocatalysis modification is found at Ser-220. At Thr-231 the chain carries Phosphothreonine; by PKG; by autocatalysis. The residue at position 335 (Ser-335) is a Phosphoserine; by autocatalysis. Residues 346–353 carry the J domain autoinhibitory motif motif; it reads NMRKFEGS. Residues 346-364 form a j domain region; the sequence is NMRKFEGSQKLAQAAILFI. Residues 354–364 carry the J domain interacts with the EF-hand domains motif; that stretch reads QKLAQAAILFI. 4 EF-hand domains span residues 372-407, 416-451, 452-487, and 488-521; these read EERK…LRSF, NVEE…KQIL, FSEE…TSIS, and EQMW…ICDN. Ca(2+) contacts are provided by Asp-385, Asn-387, Asp-389, Gln-391, Glu-396, Asp-429, Asp-431, Asn-433, Tyr-435, Glu-440, Asp-465, Asp-467, Ser-469, Lys-471, Glu-476, Asp-499, Asn-501, Asp-503, Met-505, and Glu-510.

This sequence belongs to the protein kinase superfamily. Ser/Thr protein kinase family. CDPK subfamily. In terms of assembly, monomer. Forms a high molecular weight (250 and 400 kDa) complex. Forms a complex composed of CDPK1, PKA regulatory subunit PKAr and 14-3-3I; the complex is formed in merozoites in response to low extracellular level of K(+) and may play a role in microneme secretion. Interacts (when phosphorylated) with 14-3-3I in a Ca(2+)-independent manner; the interaction does not regulate CDPK1 catalytic activity but is required for merozoite invasion of host erythrocytes. Interacts with PKA regulatory subunit PKAr; in a Ca(2+)-dependent manner. Interacts with SERA5 p50 in the late schizont stage. Interacts with inner membrane complex protein IMC1g in late schizonts. Interacts with rhoptry protein RhopH3 in merozoites. Requires Mg(2+) as cofactor. In terms of processing, myristoylated. Myristoylation, palmitoylation and the basic cluster motif are required for the localization to the parasitophorous vacuole membrane. Post-translationally, palmitoylated. Palmitoylation increases in merozoites in response to low level of extracellular K(+) in the host blood. Myristoylation, palmitoylation and the basic cluster motif are required for the localization to the parasitophorous vacuole membrane. Phosphorylation at Ser-64 occurs at late schizont stage and regulates CDPK1 protein-protein interaction. Phosphorylated at Ser-28, Ser-34 and Ser-64 in merozoites in response to low extracellular level of K(+). Phosphorylation at Thr-231 may regulate CDPK1 kinase activity. Phosphorylation increases in response to an increase in intracellular Ca(2+) levels. Autophosphorylated in vitro. Autophosphorylation does not affect membrane localization in vitro.

Its subcellular location is the membrane. The protein resides in the cell membrane. It is found in the parasitophorous vacuole membrane. The protein localises to the cytoplasm. It localises to the cell projection. Its subcellular location is the cilium. The protein resides in the flagellum. It is found in the host cell membrane. The catalysed reaction is L-seryl-[protein] + ATP = O-phospho-L-seryl-[protein] + ADP + H(+). The enzyme catalyses L-threonyl-[protein] + ATP = O-phospho-L-threonyl-[protein] + ADP + H(+). With respect to regulation, activated by calcium. Upon calcium binding to the EF-hand domains, the C-terminus of the junction domain (J domain) undergoes a conformational change which results in the dissociation of the pseudo-substrate inhibitory motif from the catalytic domain. This, in turn may facilitate the autophosphorylation of the activation loop at Thr-231, which leads to the kinase activation. May be negatively regulated by PKA-mediated phosphorylation. Inhibited by purfalcamine. Functionally, calcium-dependent protein kinase which acts as a sensor and effector of intracellular Ca(2+) levels probably in part downstream of cGMP-activated PKG kinase. By phosphorylating various proteins, required for microneme secretion and thus merozoite egress from and invasion of host erythrocytes. During gametogenesis, essential for the development of both male and female gametes. Phosphorylates SERA5 p50 which enhances SERA5 p50 protease activity; however, SERA5 p50 protease activity has been shown in other studies to be controversial. Probably by phosphorylating SERA5 p50, plays a role in merozoite egress from host erythrocytes. Probably prior or during merozoite invasion of host erythrocytes, phosphorylates rhoptry protein RhopH3 which is required for RhopH3 localization to rhoptries and for its secretion. Probably in late schizonts, phosphorylates myosin A tail domain-interacting protein MTIP and glideosome-associated protein 45 GAP45, both of which are components of the motor complex that generates the force required by the parasite to invade host cells. In late schizonts, phosphorylates inner membrane complex protein IMC1g. In late schizonts, phosphorylates PKA regulatory subunit PKAr in a calcium-dependent manner, which may contribute to the dissociation of regulatory PKAr and catalytic PKAc subunits and promote the activation of PKAc. May phosphorylate raf kinase inhibitory protein RKIP which in turn may regulate CDPK1 catalytic activity. May phosphorylate proteins of the host erythrocyte membranes. This chain is Calcium-dependent protein kinase 1, found in Plasmodium falciparum (isolate 3D7).